A 331-amino-acid polypeptide reads, in one-letter code: Anthranilate phosphoribosyltransferase (331 aa).

5-phospho-alpha-D-ribose 1-diphosphate contacts are provided by residues G79, G82–D83, T87, N89–T92, K107–S115, and A119. G79 is a binding site for anthranilate. Residue S91 coordinates Mg(2+). N110 contacts anthranilate. Residue R165 participates in anthranilate binding. Mg(2+) contacts are provided by D223 and E224.

It belongs to the anthranilate phosphoribosyltransferase family. Homodimer. Requires Mg(2+) as cofactor.

The enzyme catalyses N-(5-phospho-beta-D-ribosyl)anthranilate + diphosphate = 5-phospho-alpha-D-ribose 1-diphosphate + anthranilate. The protein operates within amino-acid biosynthesis; L-tryptophan biosynthesis; L-tryptophan from chorismate: step 2/5. Its function is as follows. Catalyzes the transfer of the phosphoribosyl group of 5-phosphorylribose-1-pyrophosphate (PRPP) to anthranilate to yield N-(5'-phosphoribosyl)-anthranilate (PRA). This chain is Anthranilate phosphoribosyltransferase, found in Phocaeicola vulgatus (strain ATCC 8482 / DSM 1447 / JCM 5826 / CCUG 4940 / NBRC 14291 / NCTC 11154) (Bacteroides vulgatus).